The primary structure comprises 130 residues: UPF0212 protein TSIB_1358 (130 aa).

It belongs to the UPF0212 family.

The chain is UPF0212 protein TSIB_1358 from Thermococcus sibiricus (strain DSM 12597 / MM 739).